The sequence spans 504 residues: Cytochrome P450 71B7 (504 aa).

The helical transmembrane segment at 1 to 21 (MSILLCFLCLLPVFLVSLSIL) threads the bilayer. A Glycyl lysine isopeptide (Lys-Gly) (interchain with G-Cter in ubiquitin) cross-link involves residue Lys82. Cys446 contacts heme.

The protein belongs to the cytochrome P450 family. Heme serves as cofactor. Highly expressed in rosette leaves. Also expressed in roots, leaves, flowers, and siliques.

The protein localises to the membrane. In Arabidopsis thaliana (Mouse-ear cress), this protein is Cytochrome P450 71B7 (CYP71B7).